The following is a 302-amino-acid chain: MNIRDLEYLVALAEHRHFRRAADSCHVSQPTLSGQIRKLEDELGVMLLERTSRKVLFTQAGLLLVEQARTVLREVKVLKEMASQQGETMSGPLHIGLIPTVGPYLLPQIIPMLHRTFPKLEMYLHEAQTHQLLAQLDSGKLDCAILAMVKESEAFIEVPLFDEPMKLAIYQDHPWANRERVAMSDLAGEKLLMLEDGHCLRDQAMGFCFQAGADEDTHFRATSLETLRNMVAAGSGITLLPALSVPRERERDGVCYLPCYKPEPKRTIALVYRPGSPLRGRYEQLADTIREHMQGYMETLSK.

The HTH lysR-type domain occupies 1–58 (MNIRDLEYLVALAEHRHFRRAADSCHVSQPTLSGQIRKLEDELGVMLLERTSRKVLFT). The segment at residues 18–37 (FRRAADSCHVSQPTLSGQIR) is a DNA-binding region (H-T-H motif).

Belongs to the LysR transcriptional regulatory family.

In terms of biological role, required for the induction of a regulon of hydrogen peroxide inducible genes such as catalase and glutathione-reductase. The chain is Hydrogen peroxide-inducible genes activator (oxyR) from Pectobacterium carotovorum subsp. carotovorum (Erwinia carotovora subsp. carotovora).